The chain runs to 218 residues: Ras-related protein Rab-4A (218 aa).

9 residues coordinate GTP: glycine 23, threonine 24, glycine 25, lysine 26, serine 27, cysteine 28, serine 42, histidine 44, and threonine 45. Residue serine 27 participates in Mg(2+) binding. Residues 44–49 carry the Switch 1 motif; the sequence is HTIGVE. Residues threonine 45 and aspartate 68 each contribute to the Mg(2+) site. Positions 70-79 match the Switch 2 motif; the sequence is AGQERFRSVT. Glycine 71 serves as a coordination point for GTP. A 5-glutamyl serotonin modification is found at glutamine 72. The GTP site is built by asparagine 126, lysine 127, aspartate 129, alanine 157, and leucine 158. The residue at position 190 (serine 190) is a Phosphoserine. Phosphoserine; by CDK1 is present on serine 204. Residues cysteine 216 and cysteine 218 are each lipidated (S-geranylgeranyl cysteine). Cysteine methyl ester is present on cysteine 218.

Belongs to the small GTPase superfamily. Rab family. Interacts with SGSM1, SGSM2 and SGSM3. Interacts with RAB11FIP1, RABEP1, ZFYVE20 and RUFY1. Interacts (membrane-bound form) with NDRG1; the interaction involves NDRG1 in vesicular recycling of E-cadherin. Interacts (in GTP-bound form) with GRIPAP1 (via N-terminus). Interacts with RABEP1 and RBSN. Does not interact with HPS4. Does not interact with HPS4. Interacts with RABEP2; this interaction may mediate VEGFR2 cell surface expression. It depends on Mg(2+) as a cofactor. Post-translationally, serotonylation of Gln-72 by TGM2 during activation and aggregation of platelets leads to constitutive activation of GTPase activity. In terms of processing, phosphorylated by CDK1 kinase during mitosis. Expressed in the central nervous system, including cortex, cerebellum, midbrain and spinal cord, and in the kidney, lung, liver and spleen.

The protein resides in the membrane. It localises to the cytoplasm. The protein localises to the early endosome membrane. It is found in the recycling endosome membrane. It catalyses the reaction GTP + H2O = GDP + phosphate + H(+). Its activity is regulated as follows. Regulated by guanine nucleotide exchange factors (GEFs) which promote the exchange of bound GDP for free GTP. Regulated by GTPase activating proteins (GAPs) which increase the GTP hydrolysis activity. Inhibited by GDP dissociation inhibitors (GDIs). Its function is as follows. The small GTPases Rab are key regulators of intracellular membrane trafficking, from the formation of transport vesicles to their fusion with membranes. Rabs cycle between an inactive GDP-bound form and an active GTP-bound form that is able to recruit to membranes different sets of downstream effectors directly responsible for vesicle formation, movement, tethering and fusion. RAB4A is involved in protein transport. Also plays a role in vesicular traffic. Mediates VEGFR2 endosomal trafficking to enhance VEGFR2 signaling. Acts as a regulator of platelet alpha-granule release during activation and aggregation of platelets. The chain is Ras-related protein Rab-4A from Mus musculus (Mouse).